Here is a 239-residue protein sequence, read N- to C-terminus: Sugar fermentation stimulation protein homolog (239 aa).

The protein belongs to the SfsA family.

The protein is Sugar fermentation stimulation protein homolog of Microcystis aeruginosa (strain NIES-843 / IAM M-2473).